The sequence spans 95 residues: TBK1 inhibitor DP96R (95 aa).

The protein belongs to the asfivirus DP96R family.

Its function is as follows. Inhibits cGAS-STING-mediated type I IFN expression and NF-kB activation by inhibiting TBK1 and IKBKB/IKKB. Inhibits host TBK1 phosphorylation. The polypeptide is TBK1 inhibitor DP96R (Ornithodoros (relapsing fever ticks)).